The chain runs to 119 residues: Large ribosomal subunit protein uL14 (119 aa).

The protein belongs to the universal ribosomal protein uL14 family. As to quaternary structure, part of the 50S ribosomal subunit. Forms a cluster with proteins L3 and L19. In the 70S ribosome, L14 and L19 interact and together make contacts with the 16S rRNA in bridges B5 and B8.

In terms of biological role, binds to 23S rRNA. Forms part of two intersubunit bridges in the 70S ribosome. The chain is Large ribosomal subunit protein uL14 from Ehrlichia chaffeensis (strain ATCC CRL-10679 / Arkansas).